The following is a 158-amino-acid chain: Regenerating islet-derived protein 4 (158 aa).

The first 22 residues, 1–22 (MASRSMRLLLLLSCLAKTGVLG), serve as a signal peptide directing secretion. The cysteines at positions 30 and 41 are disulfide-linked. One can recognise a C-type lectin domain in the interval 37–155 (HKSNCYGYFR…CNKRQHFLCK (119 aa)). Residue N50 is glycosylated (N-linked (GlcNAc...) asparagine). 2 disulfides stabilise this stretch: C58/C154 and C129/C146. Residues 98-103 (DPQKRQ) and 135-137 (NNN) contribute to the a carbohydrate site.

As to expression, highly expressed in the gastrointestinal tract including the duodenum, jejunum, ileum, ileocecum, appendix, descending colon, pancreas and small intestine. Weakly expressed in normal colon and stomach. Strongly expressed in most colorectal tumors than in normal colon. Preferentially expressed in mucinous tumors and in some cases neuro-endocrine tumors. Expressed in mucus-secreting cells and enterocyte-like cells. In small intestine expressed at the basal perinuclear zone of goblet cells.

It localises to the secreted. In terms of biological role, calcium-independent lectin displaying mannose-binding specificity and able to maintain carbohydrate recognition activity in an acidic environment. May be involved in inflammatory and metaplastic responses of the gastrointestinal epithelium. This is Regenerating islet-derived protein 4 (REG4) from Homo sapiens (Human).